Consider the following 142-residue polypeptide: UPF0179 protein PH1477 (142 aa).

This sequence belongs to the UPF0179 family.

This chain is UPF0179 protein PH1477, found in Pyrococcus horikoshii (strain ATCC 700860 / DSM 12428 / JCM 9974 / NBRC 100139 / OT-3).